We begin with the raw amino-acid sequence, 260 residues long: Ribonuclease HII (260 aa).

Positions 71–259 constitute an RNase H type-2 domain; the sequence is RRIAGIDEAG…VREVLKASEQ (189 aa). Residues Asp77, Glu78, and Asp169 each coordinate a divalent metal cation.

This sequence belongs to the RNase HII family. Requires Mn(2+) as cofactor. Mg(2+) is required as a cofactor.

Its subcellular location is the cytoplasm. The enzyme catalyses Endonucleolytic cleavage to 5'-phosphomonoester.. Its function is as follows. Endonuclease that specifically degrades the RNA of RNA-DNA hybrids. The chain is Ribonuclease HII from Geobacillus kaustophilus (strain HTA426).